The sequence spans 421 residues: MDLEAKVKKMGLGHEQGFGAPCLKCKEKCEGFELHFWRKICRNCKCGQEEHDVLLSSEEDRKVGKLFEDTKYTTLIAKLKSDGIPMYKRNVMILTNPVPAKKNVSINTVTYEWAPPVQNQALARQYMQMLPKEKQPVAGSEGAQYRKKQLAKQLPEHDQDPSKCHELSPKEVKEMEQFVKKYKNEALGVGDVKLPSEMDAQAPNRICIPGGDRSTTAAVGAMEAKSGEHRRTQYSCYGCKLSMKEGDPAVYAERAGYNKLWHPACFICSTCCELLVDMIYFWKNGKLYCGRHYCDSEKPRCAGCDELIFSNEYTQAENQNWHLKHFCCFDCDNILAGEIYVMVNEKPVCKPCYVKNHAVVCQGCHNAIDPEVQRVTYNNFSWHASTECFLCSCCSKCLIGQKFMPVEGMVFCSVECKKMMS.

Residues 92–199 (MILTNPVPAK…GDVKLPSEMD (108 aa)) form the PET domain. Positions 135–165 (QPVAGSEGAQYRKKQLAKQLPEHDQDPSKCH) are disordered. The segment covering 154–165 (LPEHDQDPSKCH) has biased composition (basic and acidic residues). LIM zinc-binding domains lie at 234 to 297 (YSCY…CDSE), 299 to 359 (PRCA…NHAV), and 362 to 421 (QGCH…KMMS).

Belongs to the prickle / espinas / testin family. Interacts via LIM domain 1 with ZYX. Interacts (via LIM domain 3) with ENAH and VASP. Interacts with ALKBH4, talin, actin, alpha-actinin, GRIP1 and PXN. Interacts (via LIM domain 2) with ACTL7A (via N-terminus). Heterodimer with ACTL7A; the heterodimer interacts with ENAH to form a heterotrimer.

Its subcellular location is the cytoplasm. It localises to the cell junction. It is found in the focal adhesion. Scaffold protein that may play a role in cell adhesion, cell spreading and in the reorganization of the actin cytoskeleton. Plays a role in the regulation of cell proliferation. May act as a tumor suppressor. The protein is Testin (TES) of Dasypus novemcinctus (Nine-banded armadillo).